Here is a 139-residue protein sequence, read N- to C-terminus: Large ribosomal subunit protein bL17 (139 aa).

This sequence belongs to the bacterial ribosomal protein bL17 family. In terms of assembly, part of the 50S ribosomal subunit. Contacts protein L32.

The chain is Large ribosomal subunit protein bL17 from Sphingopyxis alaskensis (strain DSM 13593 / LMG 18877 / RB2256) (Sphingomonas alaskensis).